The sequence spans 179 residues: tRNA-splicing endonuclease (179 aa).

Catalysis depends on residues tyrosine 115, histidine 125, and lysine 156.

The protein belongs to the tRNA-intron endonuclease family. Archaeal short subfamily. In terms of assembly, homotetramer; although the tetramer contains four active sites, only two participate in the cleavage. Therefore, it should be considered as a dimer of dimers.

It carries out the reaction pretRNA = a 3'-half-tRNA molecule with a 5'-OH end + a 5'-half-tRNA molecule with a 2',3'-cyclic phosphate end + an intron with a 2',3'-cyclic phosphate and a 5'-hydroxyl terminus.. In terms of biological role, endonuclease that removes tRNA introns. Cleaves pre-tRNA at the 5'- and 3'-splice sites to release the intron. The products are an intron and two tRNA half-molecules bearing 2',3' cyclic phosphate and 5'-OH termini. Recognizes a pseudosymmetric substrate in which 2 bulged loops of 3 bases are separated by a stem of 4 bp. This chain is tRNA-splicing endonuclease (endA), found in Methanocaldococcus jannaschii (strain ATCC 43067 / DSM 2661 / JAL-1 / JCM 10045 / NBRC 100440) (Methanococcus jannaschii).